The chain runs to 376 residues: Ribonuclease D (376 aa).

A 3'-5' exonuclease domain is found at 8-176 (IQWIRDDASL…VYLALDARLS (169 aa)). The region spanning 214–294 (RPQQLAVLRE…AEAARLPQSE (81 aa)) is the HRDC domain.

Belongs to the RNase D family. The cofactor is a divalent metal cation.

Its subcellular location is the cytoplasm. It catalyses the reaction Exonucleolytic cleavage that removes extra residues from the 3'-terminus of tRNA to produce 5'-mononucleotides.. Its function is as follows. Exonuclease involved in the 3' processing of various precursor tRNAs. Initiates hydrolysis at the 3'-terminus of an RNA molecule and releases 5'-mononucleotides. This Pseudomonas paraeruginosa (strain DSM 24068 / PA7) (Pseudomonas aeruginosa (strain PA7)) protein is Ribonuclease D.